Consider the following 294-residue polypeptide: Cytidine deaminase (294 aa).

2 CMP/dCMP-type deaminase domains span residues aspartate 48–lysine 168 and leucine 186–glycine 294. A substrate-binding site is contributed by asparagine 89–glutamate 91. Position 102 (histidine 102) interacts with Zn(2+). The active-site Proton donor is the glutamate 104. Cysteine 129 and cysteine 132 together coordinate Zn(2+).

Belongs to the cytidine and deoxycytidylate deaminase family. As to quaternary structure, homodimer. Zn(2+) is required as a cofactor.

The enzyme catalyses cytidine + H2O + H(+) = uridine + NH4(+). The catalysed reaction is 2'-deoxycytidine + H2O + H(+) = 2'-deoxyuridine + NH4(+). This enzyme scavenges exogenous and endogenous cytidine and 2'-deoxycytidine for UMP synthesis. The chain is Cytidine deaminase from Salmonella newport (strain SL254).